A 314-amino-acid chain; its full sequence is Serine hydrolase-like protein 2 (314 aa).

In terms of domain architecture, AB hydrolase-1 spans 33–293 (PPVLCLHGWL…GNHCVHMSEP (261 aa)). Residue S108 is part of the active site.

The protein belongs to the AB hydrolase superfamily.

Its subcellular location is the cytoplasm. The protein localises to the perinuclear region. The protein resides in the peroxisome. Functionally, probable serine hydrolase. May be related to cell muscle hypertrophy. The protein is Serine hydrolase-like protein 2 (SERHL2) of Homo sapiens (Human).